Reading from the N-terminus, the 493-residue chain is MASGILVNVKEEVTCPICLELLTQPLSLDCGHSFCQACLTANHKKSMLDKGESSCPVCRISYQPENIRPNRHVANIVEKLREVKLSPEGQKVDHCAHHGEKLLLFCQEDGKVICWLCERSQEHRGHHTFLTEEVAREYQVKLQAALEMLRQKQQEAEELEADIREEKASWKTQIQYDKTNVLADFEQLRDILDWEESNELQNLEKEEEDILKSLTKSETEMVQQTQSVRELISDLERRLQGSVMELLQGVDGVIKRMENVTLKKPETFPKNQRRVFRAPDLKGMLEVFRELTDVRRYWVDVTVAPNNISCAVISEDMRQVSSPKPQIIYGARGTRYQTFMNFNYCTGILGSQSITSGKHYWEVDVSKKSAWILGVCAGFQPDAMCNIEKNENYQPKYGYWVIGLEEGVKCSAFQDGSFHTPSAPFIVPLSVIICPDRVGVFLDYEACTVSFFNITNHGSLIYKFSHCSFSQPVFPYLNPRKCGVPMTLCSPSS.

Residue A2 is modified to N-acetylalanine. The RING-type zinc finger occupies 15–59; it reads CPICLELLTQPLSLDCGHSFCQACLTANHKKSMLDKGESSCPVCR. Position 86 is a phosphoserine (S86). A B box-type zinc finger spans residues 90–132; that stretch reads QKVDHCAHHGEKLLLFCQEDGKVICWLCERSQEHRGHHTFLTE. Zn(2+) is bound by residues C95, H98, C117, and H123. Residues 131–240 adopt a coiled-coil conformation; sequence TEEVAREYQV…LISDLERRLQ (110 aa). A required for interaction with GABARAP and for autophagy region spans residues 185–198; sequence FEQLRDILDWEESN. A B30.2/SPRY domain is found at 281–493; it reads LKGMLEVFRE…VPMTLCSPSS (213 aa).

It belongs to the TRIM/RBCC family. In terms of assembly, can form homodimers and homotrimers. In addition to lower-order dimerization, also exhibits a higher-order multimerization and both low- and high-order multimerizations are essential for its restriction activity. Interacts with BTBD1 and BTBD2. Interacts with PSMC4, PSMC5, PSMD7 and HSPA8/HSC70. Interacts (via B30.2/SPRY domain) with HSPA1A/B. Interacts with PSMC2, MAP3K7/TAK1, TAB2 and TAB3. Interacts with SQSTM1. Interacts with TRIM6 and TRIM34. Interacts with ULK1 (phosphorylated form), GABARAP, GABARAPL1, GABARAPL2, MAP1LC3A, MAP1LC3C and BECN1. Degraded in a proteasome-independent fashion in the absence of viral infection but in a proteasome-dependent fashion following exposure to restriction sensitive virus. In terms of processing, autoubiquitinated in a RING finger- and UBE2D2-dependent manner. Monoubiquitinated by TRIM21. Deubiquitinated by Yersinia YopJ. Ubiquitination may not lead to proteasomal degradation.

It is found in the cytoplasm. The protein resides in the nucleus. It catalyses the reaction S-ubiquitinyl-[E2 ubiquitin-conjugating enzyme]-L-cysteine + [acceptor protein]-L-lysine = [E2 ubiquitin-conjugating enzyme]-L-cysteine + N(6)-ubiquitinyl-[acceptor protein]-L-lysine.. It functions in the pathway protein modification; protein ubiquitination. In terms of biological role, capsid-specific restriction factor that prevents infection from non-host-adapted retroviruses. Blocks viral replication early in the life cycle, after viral entry but before reverse transcription. In addition to acting as a capsid-specific restriction factor, also acts as a pattern recognition receptor that activates innate immune signaling in response to the retroviral capsid lattice. Binding to the viral capsid triggers its E3 ubiquitin ligase activity, and in concert with the heterodimeric ubiquitin conjugating enzyme complex UBE2V1-UBE2N (also known as UBC13-UEV1A complex) generates 'Lys-63'-linked polyubiquitin chains, which in turn are catalysts in the autophosphorylation of the MAP3K7/TAK1 complex (includes TAK1, TAB2, and TAB3). Activation of the MAP3K7/TAK1 complex by autophosphorylation results in the induction and expression of NF-kappa-B and MAPK-responsive inflammatory genes, thereby leading to an innate immune response in the infected cell. Plays a role in regulating autophagy through activation of autophagy regulator BECN1 by causing its dissociation from its inhibitors BCL2 and TAB2. The sequence is that of Tripartite motif-containing protein 5 (TRIM5) from Pan troglodytes (Chimpanzee).